A 319-amino-acid chain; its full sequence is 4-hydroxy-3-methylbut-2-enyl diphosphate reductase (319 aa).

Cysteine 15 is a [4Fe-4S] cluster binding site. Histidine 44 and histidine 77 together coordinate (2E)-4-hydroxy-3-methylbut-2-enyl diphosphate. Histidine 44 and histidine 77 together coordinate dimethylallyl diphosphate. The isopentenyl diphosphate site is built by histidine 44 and histidine 77. Cysteine 99 contributes to the [4Fe-4S] cluster binding site. Histidine 127 serves as a coordination point for (2E)-4-hydroxy-3-methylbut-2-enyl diphosphate. Histidine 127 contacts dimethylallyl diphosphate. Histidine 127 provides a ligand contact to isopentenyl diphosphate. Catalysis depends on glutamate 129, which acts as the Proton donor. Threonine 172 lines the (2E)-4-hydroxy-3-methylbut-2-enyl diphosphate pocket. Cysteine 202 is a binding site for [4Fe-4S] cluster. (2E)-4-hydroxy-3-methylbut-2-enyl diphosphate contacts are provided by serine 230, serine 231, asparagine 232, and serine 274. The dimethylallyl diphosphate site is built by serine 230, serine 231, asparagine 232, and serine 274. Isopentenyl diphosphate contacts are provided by serine 230, serine 231, asparagine 232, and serine 274.

This sequence belongs to the IspH family. It depends on [4Fe-4S] cluster as a cofactor.

The catalysed reaction is isopentenyl diphosphate + 2 oxidized [2Fe-2S]-[ferredoxin] + H2O = (2E)-4-hydroxy-3-methylbut-2-enyl diphosphate + 2 reduced [2Fe-2S]-[ferredoxin] + 2 H(+). The enzyme catalyses dimethylallyl diphosphate + 2 oxidized [2Fe-2S]-[ferredoxin] + H2O = (2E)-4-hydroxy-3-methylbut-2-enyl diphosphate + 2 reduced [2Fe-2S]-[ferredoxin] + 2 H(+). It functions in the pathway isoprenoid biosynthesis; dimethylallyl diphosphate biosynthesis; dimethylallyl diphosphate from (2E)-4-hydroxy-3-methylbutenyl diphosphate: step 1/1. Its pathway is isoprenoid biosynthesis; isopentenyl diphosphate biosynthesis via DXP pathway; isopentenyl diphosphate from 1-deoxy-D-xylulose 5-phosphate: step 6/6. Functionally, catalyzes the conversion of 1-hydroxy-2-methyl-2-(E)-butenyl 4-diphosphate (HMBPP) into a mixture of isopentenyl diphosphate (IPP) and dimethylallyl diphosphate (DMAPP). Acts in the terminal step of the DOXP/MEP pathway for isoprenoid precursor biosynthesis. The chain is 4-hydroxy-3-methylbut-2-enyl diphosphate reductase from Xanthomonas euvesicatoria pv. vesicatoria (strain 85-10) (Xanthomonas campestris pv. vesicatoria).